We begin with the raw amino-acid sequence, 253 residues long: Large ribosomal subunit protein mL57 (253 aa).

Residues 1–28 constitute a mitochondrion transit peptide; that stretch reads MENSMMFISRSLRRPVTALNCNLQSVRT.

Belongs to the ribonuclease III family. Mitochondrion-specific ribosomal protein mL57 subfamily. In terms of assembly, component of the mitochondrial large ribosomal subunit (mt-LSU). Mature yeast 74S mitochondrial ribosomes consist of a small (37S) and a large (54S) subunit. The 37S small subunit contains a 15S ribosomal RNA (15S mt-rRNA) and 34 different proteins. The 54S large subunit contains a 21S rRNA (21S mt-rRNA) and 46 different proteins. mL57 forms a heterodimer with mL44 and stabilizes rRNA expansion segments 1/2 at a membrane-facing protuberance close to the point of attachment of the ribosome to the translocon in the membrane.

It is found in the mitochondrion. Component of the mitochondrial ribosome (mitoribosome), a dedicated translation machinery responsible for the synthesis of mitochondrial genome-encoded proteins, including at least some of the essential transmembrane subunits of the mitochondrial respiratory chain. The mitoribosomes are attached to the mitochondrial inner membrane and translation products are cotranslationally integrated into the membrane. The protein is Large ribosomal subunit protein mL57 (MRPL15) of Saccharomyces cerevisiae (strain ATCC 204508 / S288c) (Baker's yeast).